Here is a 360-residue protein sequence, read N- to C-terminus: DNA replication and repair protein RecF (360 aa).

33–40 (GENGSGKT) serves as a coordination point for ATP.

It belongs to the RecF family.

It localises to the cytoplasm. Functionally, the RecF protein is involved in DNA metabolism; it is required for DNA replication and normal SOS inducibility. RecF binds preferentially to single-stranded, linear DNA. It also seems to bind ATP. In Rickettsia massiliae (strain Mtu5), this protein is DNA replication and repair protein RecF.